Reading from the N-terminus, the 293-residue chain is Insulin-like growth factor-binding protein 3 (293 aa).

Positions 1-27 (MQRARPALWAAALIALALLRGPPAARA) are cleaved as a signal peptide. The region spanning 36-119 (PVVRCEPCDA…LDGRGICANA (84 aa)) is the IGFBP N-terminal domain. Intrachain disulfides connect C40-C69, C43-C71, C51-C72, C60-C75, C83-C96, and C90-C116. N118 and N138 each carry an N-linked (GlcNAc...) asparagine glycan. Disordered regions lie at residues 132-166 (APPAPGNGSESEEDRSVDSMENQALPSTHRVPDSK) and 178-213 (KKGHAKDSQRYKVDYESQSTDTQNFSSESKRETEYG). S150 carries the phosphoserine modification. Residues 178-192 (KKGHAKDSQRYKVDY) show a composition bias toward basic and acidic residues. Residues 193–204 (ESQSTDTQNFSS) show a composition bias toward polar residues. A glycan (N-linked (GlcNAc...) asparagine) is linked at N201. S203 is modified (phosphoserine). A Thyroglobulin type-1 domain is found at 212-287 (YGPCRREMED…DVKGKGDVHC (76 aa)). Intrachain disulfides connect C215–C242, C253–C264, and C266–C287.

In terms of assembly, interacts with XLKD1. Binds IGF2 more than IGF1. Forms a ternary complex of about 140 to 150 kDa with IGF1 or IGF2 and a 85 kDa glycoprotein (ALS). Interacts with humanin; humanin competes with importin KPNB1 for binding to IGFBP3, blocking IGFBP3 nuclear import and IGFBP3-mediated apoptosis. Interacts with TMEM219. Interacts with RXRA; this interaction modulates the transcriptional activity of RXRA. Interacts with LRP1; this interaction mediates cell growth inhibition independent of IGF1. Phosphorylated by FAM20C in the extracellular medium. Phosphorylated by CK2; resulting in decreased nuclear localization.

The protein localises to the secreted. It localises to the nucleus. Its function is as follows. Multifunctional protein that plays a critical role in regulating the availability of IGFs such as IGF1 and IGF2 to their receptors and thereby regulates IGF-mediated cellular processes including proliferation, differentiation, and apoptosis in a cell-type specific manner. Also exhibits IGF-independent antiproliferative and apoptotic effects mediated by its receptor TMEM219/IGFBP-3R. Inhibits the positive effect of humanin on insulin sensitivity. Promotes testicular germ cell apoptosis. Acts via LRP-1/alpha2M receptor, also known as TGF-beta type V receptor, to mediate cell growth inhibition independent of IGF1. Mechanistically, induces serine-specific dephosphorylation of IRS1 or IRS2 upon ligation to its receptor, leading to the inhibitory cascade. In the nucleus, interacts with transcription factors such as retinoid X receptor-alpha/RXRA to regulate transcriptional signaling and apoptosis. In Sus scrofa (Pig), this protein is Insulin-like growth factor-binding protein 3 (IGFBP3).